Consider the following 104-residue polypeptide: Cytochrome c6 (104 aa).

Positions 1-20 (MKSLLTFILTTIFCIQQVWA) are cleaved as a signal peptide. Heme c-binding residues include Cys34, Cys37, His38, and Met78.

This sequence belongs to the cytochrome c family. PetJ subfamily. As to quaternary structure, monomer. Binds 1 heme c group covalently per subunit.

It is found in the plastid. Its subcellular location is the chloroplast thylakoid lumen. Functionally, functions as an electron carrier between membrane-bound cytochrome b6-f and photosystem I in oxygenic photosynthesis. This chain is Cytochrome c6, found in Cyanidioschyzon merolae (strain NIES-3377 / 10D) (Unicellular red alga).